The sequence spans 143 residues: Large ribosomal subunit protein uL13c (143 aa).

It belongs to the universal ribosomal protein uL13 family. Part of the 50S ribosomal subunit.

It is found in the plastid. The protein localises to the chloroplast. The polypeptide is Large ribosomal subunit protein uL13c (Gracilaria tenuistipitata var. liui (Red alga)).